We begin with the raw amino-acid sequence, 287 residues long: Ribosomal RNA small subunit methyltransferase I (287 aa).

It belongs to the methyltransferase superfamily. RsmI family.

The protein resides in the cytoplasm. It catalyses the reaction cytidine(1402) in 16S rRNA + S-adenosyl-L-methionine = 2'-O-methylcytidine(1402) in 16S rRNA + S-adenosyl-L-homocysteine + H(+). In terms of biological role, catalyzes the 2'-O-methylation of the ribose of cytidine 1402 (C1402) in 16S rRNA. The sequence is that of Ribosomal RNA small subunit methyltransferase I from Streptococcus pyogenes serotype M18 (strain MGAS8232).